Reading from the N-terminus, the 182-residue chain is Acireductone dioxygenase (182 aa).

His100, His102, Glu106, and His145 together coordinate Fe(2+). Positions 100, 102, 106, and 145 each coordinate Ni(2+).

It belongs to the acireductone dioxygenase (ARD) family. As to quaternary structure, monomer. Requires Fe(2+) as cofactor. Ni(2+) serves as cofactor.

The catalysed reaction is 1,2-dihydroxy-5-(methylsulfanyl)pent-1-en-3-one + O2 = 3-(methylsulfanyl)propanoate + CO + formate + 2 H(+). It carries out the reaction 1,2-dihydroxy-5-(methylsulfanyl)pent-1-en-3-one + O2 = 4-methylsulfanyl-2-oxobutanoate + formate + 2 H(+). It participates in amino-acid biosynthesis; L-methionine biosynthesis via salvage pathway; L-methionine from S-methyl-5-thio-alpha-D-ribose 1-phosphate: step 5/6. In terms of biological role, catalyzes 2 different reactions between oxygen and the acireductone 1,2-dihydroxy-3-keto-5-methylthiopentene (DHK-MTPene) depending upon the metal bound in the active site. Fe-containing acireductone dioxygenase (Fe-ARD) produces formate and 2-keto-4-methylthiobutyrate (KMTB), the alpha-ketoacid precursor of methionine in the methionine recycle pathway. Ni-containing acireductone dioxygenase (Ni-ARD) produces methylthiopropionate, carbon monoxide and formate, and does not lie on the methionine recycle pathway. The polypeptide is Acireductone dioxygenase (Trichormus variabilis (strain ATCC 29413 / PCC 7937) (Anabaena variabilis)).